The primary structure comprises 382 residues: Intermediate transcription factor 3 large subunit (382 aa).

The protein belongs to the orthopoxvirus OPG150 family. In terms of assembly, heterodimerizes with protein A8 to form the virus intermediate transcription factor (VITF)-3.

Functionally, acts with RNA polymerase to initiate transcription from intermediate gene promoters. The sequence is that of Intermediate transcription factor 3 large subunit (OPG150) from Bos taurus (Bovine).